Consider the following 274-residue polypeptide: UPF0173 metal-dependent hydrolase Adeh_1068 (274 aa).

It belongs to the UPF0173 family.

The protein is UPF0173 metal-dependent hydrolase Adeh_1068 of Anaeromyxobacter dehalogenans (strain 2CP-C).